The chain runs to 254 residues: UPF0246 protein lpp1320 (254 aa).

This sequence belongs to the UPF0246 family.

In Legionella pneumophila (strain Paris), this protein is UPF0246 protein lpp1320.